The chain runs to 242 residues: MTTVSMRDMLQAGVHFGHQTRYWNPKMKPFIFGARNGVHIINLEHTVPMFNEALAFISNVASKKGKVLFVGTKRAASEAIKEAAVSCDQYYVDHRWLGGMLTNWKTVRQSIKRLKDLESQSVDGTFDKLTKKEALMRTRELDKLEKSLGGIKNMAGLPDVIFVIGADHEHIAIKEANNLGIPVVAVVDTNSSPDGINYIIPGNDDAMRSIRLYTQSVAAAAKAGRGQDLAVQAEQDGFVEAE.

It belongs to the universal ribosomal protein uS2 family.

This Shewanella pealeana (strain ATCC 700345 / ANG-SQ1) protein is Small ribosomal subunit protein uS2.